We begin with the raw amino-acid sequence, 84 residues long: Trefoil factor 1 (84 aa).

A signal peptide spans 1–24; it reads MATMENKVICALVLVSMLALGTLA. A P-type domain is found at 29–72; the sequence is ETCTVAPRERQNCGFPGVTPSQCANKGCCFDDTVRGVPWCFYPN. Cystine bridges form between cysteine 31–cysteine 57, cysteine 41–cysteine 56, and cysteine 51–cysteine 68.

In terms of assembly, heterodimer with GKN2; disulfide linked. Found in stomach, with highest levels in the upper gastric mucosal cells (at protein level). Detected in goblet cells of the small and large intestine and rectum, small submucosal glands in the esophagus, mucous acini of the sublingual gland, submucosal glands of the trachea, and epithelial cells lining the exocrine pancreatic ducts but not in the remainder of the pancreas (at protein level). Scattered expression is detected in the epithelial cells of the gallbladder and submucosal glands of the vagina, and weak expression is observed in the bronchial goblet cells of the pseudostratified epithelia in the respiratory system (at protein level). Detected in urine (at protein level). Strongly expressed in breast cancer but at low levels in normal mammary tissue. It is regulated by estrogen in MCF-7 cells. Strong expression found in normal gastric mucosa and in the regenerative tissues surrounding ulcerous lesions of gastrointestinal tract, but lower expression found in gastric cancer (at protein level).

It localises to the secreted. Stabilizer of the mucous gel overlying the gastrointestinal mucosa that provides a physical barrier against various noxious agents. May inhibit the growth of calcium oxalate crystals in urine. In Homo sapiens (Human), this protein is Trefoil factor 1 (TFF1).